A 112-amino-acid polypeptide reads, in one-letter code: Photosystem II reaction center Psb28 protein (112 aa).

Belongs to the Psb28 family. Part of the photosystem II complex.

The protein resides in the cellular thylakoid membrane. This is Photosystem II reaction center Psb28 protein from Microcystis aeruginosa (strain NIES-843 / IAM M-2473).